We begin with the raw amino-acid sequence, 560 residues long: DNA ligase B (560 aa).

The active-site N6-AMP-lysine intermediate is Lys-124.

The protein belongs to the NAD-dependent DNA ligase family. LigB subfamily.

It catalyses the reaction NAD(+) + (deoxyribonucleotide)n-3'-hydroxyl + 5'-phospho-(deoxyribonucleotide)m = (deoxyribonucleotide)n+m + AMP + beta-nicotinamide D-nucleotide.. In terms of biological role, catalyzes the formation of phosphodiester linkages between 5'-phosphoryl and 3'-hydroxyl groups in double-stranded DNA using NAD as a coenzyme and as the energy source for the reaction. The polypeptide is DNA ligase B (Escherichia coli O17:K52:H18 (strain UMN026 / ExPEC)).